The sequence spans 178 residues: ATP-dependent protease subunit HslV (178 aa).

Residue Thr8 is part of the active site. Residues Gly163, Cys166, and Thr169 each coordinate Na(+).

The protein belongs to the peptidase T1B family. HslV subfamily. A double ring-shaped homohexamer of HslV is capped on each side by a ring-shaped HslU homohexamer. The assembly of the HslU/HslV complex is dependent on binding of ATP.

It localises to the cytoplasm. It catalyses the reaction ATP-dependent cleavage of peptide bonds with broad specificity.. Allosterically activated by HslU binding. Functionally, protease subunit of a proteasome-like degradation complex believed to be a general protein degrading machinery. This chain is ATP-dependent protease subunit HslV, found in Xylella fastidiosa (strain 9a5c).